The chain runs to 98 residues: NADH-ubiquinone oxidoreductase chain 4L (98 aa).

3 helical membrane passes run 1 to 21 (MSVVYINIFLAFILSFMGLLV), 30 to 50 (LLCLEGMMLSLFVMMTITVLT), and 61 to 81 (IILLVFAACEAALGLSLLVMI).

The protein belongs to the complex I subunit 4L family. As to quaternary structure, core subunit of respiratory chain NADH dehydrogenase (Complex I) which is composed of 45 different subunits.

The protein localises to the mitochondrion inner membrane. The catalysed reaction is a ubiquinone + NADH + 5 H(+)(in) = a ubiquinol + NAD(+) + 4 H(+)(out). In terms of biological role, core subunit of the mitochondrial membrane respiratory chain NADH dehydrogenase (Complex I) which catalyzes electron transfer from NADH through the respiratory chain, using ubiquinone as an electron acceptor. Part of the enzyme membrane arm which is embedded in the lipid bilayer and involved in proton translocation. This is NADH-ubiquinone oxidoreductase chain 4L (MT-ND4L) from Lontra canadensis (North American river otter).